A 1015-amino-acid polypeptide reads, in one-letter code: DNA polymerase catalytic subunit (1015 aa).

The protein belongs to the DNA polymerase type-B family. Forms a complex with the major DNA-binding protein BALF2, the DNA polymerase processivity factor BMRF1, and the alkaline exonuclease BGLF5. Interacts with the putative helicase-primase complex composed of BBLF4, BSLF1 and BBLF2/3 proteins; these interactions may coordinate leading and lagging strand DNA synthesis at the replication fork.

The protein resides in the host nucleus. It catalyses the reaction DNA(n) + a 2'-deoxyribonucleoside 5'-triphosphate = DNA(n+1) + diphosphate. Functionally, replicates viral genomic DNA in the late phase of lytic infection, producing long concatemeric DNA. The replication complex is composed of six viral proteins: the DNA polymerase, processivity factor, primase, primase-associated factor, helicase, and ssDNA-binding protein. The chain is DNA polymerase catalytic subunit from Homo sapiens (Human).